The chain runs to 712 residues: Interleukin-1 receptor-associated kinase 1 (712 aa).

The 80-residue stretch at 27–106 (MCRFYKVMDA…DIITAWHPPA (80 aa)) folds into the Death domain. Position 66 is a phosphothreonine; by PKC/PRKCI (Thr-66). The segment at 105-187 (PAPLPSPGTT…STKPGPESSV (83 aa)) is disordered. The proST region stretch occupies residues 110-211 (SPGTTAPRPS…LCEISRGTHN (102 aa)). Residues 115–133 (APRPSSIPAPAEAEAWSPR) show a composition bias toward low complexity. The residue at position 131 (Ser-131) is a Phosphoserine. Lys-134 is covalently cross-linked (Glycyl lysine isopeptide (Lys-Gly) (interchain with G-Cter in ubiquitin)). The span at 137 to 154 (SSASTFLSPAFPGSQTHS) shows a compositional bias: polar residues. Lys-180 participates in a covalent cross-link: Glycyl lysine isopeptide (Lys-Gly) (interchain with G-Cter in ubiquitin). Position 209 is a phosphothreonine; by IRAK4 (Thr-209). The Protein kinase domain occupies 212-521 (FSEELKIGEG…TQVYERLEKL (310 aa)). ATP is bound by residues 218 to 226 (IGEGGFGCV) and Lys-239. The active-site Proton acceptor is the Asp-340. Residues 342 to 345 (KSSN) and Asp-358 contribute to the ATP site. 2 positions are modified to phosphoserine: Ser-371 and Ser-375. At Thr-387 the chain carries Phosphothreonine. Disordered stretches follow at residues 532–591 (SEAA…SDES), 613–660 (APLR…PPQI), and 690–712 (SSLP…EFQS). Polar residues predominate over residues 543–553 (QENSYVSSTGR). Ser-556 carries the phosphoserine modification. Composition is skewed to low complexity over residues 562–575 (QPLA…AQAA) and 643–658 (EGLA…SEPP).

The protein belongs to the protein kinase superfamily. TKL Ser/Thr protein kinase family. Pelle subfamily. In terms of assembly, homodimer. Forms a complex with TRAF6, PELI1, IRAK4 and MYD88. Direct binding of SMAD6 to PELI1 prevents complex formation and hence negatively regulates IL1R-TLR signaling and eventually NF-kappa-B-mediated gene expression. The TRAF6-PELI1-IRAK4-MYD88 complex recruits MAP3K7/TAK1, TAB1 and TAB2 to mediate NF-kappa-B activation. Interaction with MYD88 recruits IRAK1 to the stimulated receptor complex. Interacts with TOLLIP; this interaction occurs in the cytosol prior to receptor activation. Interacts with IL1RL1. Interacts with PELI1 and TRAF6. Interacts (when polyubiquitinated) with IKBKG/NEMO. Interacts with RSAD2/viperin. Interacts with IRAK1BP1. Interacts with PELI2. Interacts with ZC3H12A; this interaction increases the interaction between ZC3H12A and IKBKB/IKKB. Interacts with IRAK4. Interacts with PELI3. Interacts with INAVA; the interaction takes place upon PRR stimulation. Interacts (via C-terminus) with NFATC4 (via N-terminus). As to quaternary structure, (Microbial infection) Interacts with mumps virus protein SH; this interaction inhibits downstream NF-kappa-B pathway activation. (Microbial infection) Interacts with alphaviruses SINV, CHIKV, RRV, VEEV and EEEV capsid proteins; the interactions lead to inhibition of IRAK1-dependent signaling. Mg(2+) is required as a cofactor. In terms of processing, following recruitment on the activated receptor complex, phosphorylated on Thr-209, probably by IRAK4, resulting in a conformational change of the kinase domain, allowing further phosphorylations to take place. Thr-387 phosphorylation in the activation loop is required to achieve full enzymatic activity. Post-translationally, polyubiquitinated by TRAF6 after cell stimulation with IL-1-beta by PELI1, PELI2 and PELI3. Polyubiquitination occurs with polyubiquitin chains linked through 'Lys-63'. Ubiquitination promotes interaction with NEMO/IKBKG. Also sumoylated; leading to nuclear translocation. Isoform 1 and isoform 2 are ubiquitously expressed in all tissues examined, with isoform 1 being more strongly expressed than isoform 2.

The protein resides in the cytoplasm. Its subcellular location is the nucleus. The protein localises to the lipid droplet. It carries out the reaction L-seryl-[protein] + ATP = O-phospho-L-seryl-[protein] + ADP + H(+). The catalysed reaction is L-threonyl-[protein] + ATP = O-phospho-L-threonyl-[protein] + ADP + H(+). Functionally, serine/threonine-protein kinase that plays a critical role in initiating innate immune response against foreign pathogens. Involved in Toll-like receptor (TLR) and IL-1R signaling pathways. Is rapidly recruited by MYD88 to the receptor-signaling complex upon TLR activation. Association with MYD88 leads to IRAK1 phosphorylation by IRAK4 and subsequent autophosphorylation and kinase activation. Phosphorylates E3 ubiquitin ligases Pellino proteins (PELI1, PELI2 and PELI3) to promote pellino-mediated polyubiquitination of IRAK1. Then, the ubiquitin-binding domain of IKBKG/NEMO binds to polyubiquitinated IRAK1 bringing together the IRAK1-MAP3K7/TAK1-TRAF6 complex and the NEMO-IKKA-IKKB complex. In turn, MAP3K7/TAK1 activates IKKs (CHUK/IKKA and IKBKB/IKKB) leading to NF-kappa-B nuclear translocation and activation. Alternatively, phosphorylates TIRAP to promote its ubiquitination and subsequent degradation. Phosphorylates the interferon regulatory factor 7 (IRF7) to induce its activation and translocation to the nucleus, resulting in transcriptional activation of type I IFN genes, which drive the cell in an antiviral state. When sumoylated, translocates to the nucleus and phosphorylates STAT3. This Homo sapiens (Human) protein is Interleukin-1 receptor-associated kinase 1.